A 70-amino-acid polypeptide reads, in one-letter code: Enhancer of split m6 protein (70 aa).

This Drosophila melanogaster (Fruit fly) protein is Enhancer of split m6 protein.